We begin with the raw amino-acid sequence, 261 residues long: Ribosomal RNA small subunit methyltransferase J (261 aa).

Residues 129-130 and aspartate 182 contribute to the S-adenosyl-L-methionine site; that span reads ER.

It belongs to the methyltransferase superfamily. RsmJ family.

Its subcellular location is the cytoplasm. It catalyses the reaction guanosine(1516) in 16S rRNA + S-adenosyl-L-methionine = N(2)-methylguanosine(1516) in 16S rRNA + S-adenosyl-L-homocysteine + H(+). Specifically methylates the guanosine in position 1516 of 16S rRNA. In Desulfotalea psychrophila (strain LSv54 / DSM 12343), this protein is Ribosomal RNA small subunit methyltransferase J.